The chain runs to 216 residues: Purine nucleoside phosphorylase DeoD-type (216 aa).

Residues arginine 4, arginine 23, and 67-70 (RVGT) contribute to the phosphate site. A purine D-ribonucleoside-binding positions include 159–161 (EME) and 183–184 (SD). Aspartate 184 (proton donor) is an active-site residue.

Belongs to the PNP/UDP phosphorylase family. As to quaternary structure, homohexamer; trimer of homodimers.

The catalysed reaction is a purine D-ribonucleoside + phosphate = a purine nucleobase + alpha-D-ribose 1-phosphate. The enzyme catalyses a purine 2'-deoxy-D-ribonucleoside + phosphate = a purine nucleobase + 2-deoxy-alpha-D-ribose 1-phosphate. Functionally, catalyzes the reversible phosphorolytic breakdown of the N-glycosidic bond in the beta-(deoxy)ribonucleoside molecules, with the formation of the corresponding free purine bases and pentose-1-phosphate. This chain is Purine nucleoside phosphorylase DeoD-type, found in Streptococcus thermophilus.